A 289-amino-acid polypeptide reads, in one-letter code: Eukaryotic translation initiation factor 3 subunit G (289 aa).

Disordered stretches follow at residues 1–31 and 151–199; these read MSRL…VISN and DTMA…GEKM. The region spanning 209 to 287 is the RRM domain; sequence ATLRVTNVSE…LILRVEFAKK (79 aa).

Belongs to the eIF-3 subunit G family. As to quaternary structure, component of the eukaryotic translation initiation factor 3 (eIF-3) complex.

It localises to the cytoplasm. Functionally, RNA-binding component of the eukaryotic translation initiation factor 3 (eIF-3) complex, which is involved in protein synthesis of a specialized repertoire of mRNAs and, together with other initiation factors, stimulates binding of mRNA and methionyl-tRNAi to the 40S ribosome. The eIF-3 complex specifically targets and initiates translation of a subset of mRNAs involved in cell proliferation. This subunit can bind 18S rRNA. In Coccidioides immitis (strain RS) (Valley fever fungus), this protein is Eukaryotic translation initiation factor 3 subunit G.